The chain runs to 579 residues: Glypican-2 (579 aa).

The signal sequence occupies residues 1–23; that stretch reads MSALRPLLLLLLPLCPGPGPGPG. S55, S92, and S155 each carry an O-linked (Xyl...) (heparan sulfate) serine glycan. 2 disordered regions span residues 444-468 and 485-555; these read GGSP…VPTR and ALGH…RSGG. 2 O-linked (Xyl...) (heparan sulfate) serine glycosylation sites follow: S500 and S502. A compositionally biased stretch (pro residues) spans 520-529; that stretch reads PARPPRPPYP. G554 carries GPI-anchor amidated glycine lipidation. Residues 555–579 constitute a propeptide, removed in mature form; that stretch reads GASIGFHTQTILILSLSALALLGPR.

It belongs to the glypican family. Interacts (via heparan sulfate) with PTN; this interaction promotes neurite outgrowth through binding of PTN with chondroitin sulfate of proteoglycans, thereby releasing PTPRS of chondroitin sulfate proteoglycans (CSPGs) and leading to binding with heparan sulfate of GPC2. Interacts (heparan sulfate chain) with MDK; this interaction is inhibited by heparin followed by chondroitin sulfate E; this interaction induces GPC2 clustering through heparan sulfate chain; this interaction induces neuronal cell adhesion and neurite outgrowth.

The protein localises to the cell membrane. The protein resides in the secreted. Its subcellular location is the extracellular space. In terms of biological role, cell surface proteoglycan that bears heparan sulfate. May fulfill a function related to the motile behaviors of developing neurons. This is Glypican-2 (GPC2) from Homo sapiens (Human).